The primary structure comprises 236 residues: Lectin (236 aa).

N118 carries an N-linked (GlcNAc...) asparagine glycan.

It belongs to the leguminous lectin family. As to quaternary structure, homodimer of noncovalently associated chains.

D-mannose and D-glucose specific lectin. The protein is Lectin of Onobrychis viciifolia (Common sainfoin).